Here is a 253-residue protein sequence, read N- to C-terminus: NAD-dependent protein deacylase 2 (253 aa).

One can recognise a Deacetylase sirtuin-type domain in the interval 1–252 (MEDEIRKAAE…VEEVKRLRSE (252 aa)). NAD(+) is bound by residues 23-42 (GAGISAESGIPTFRGEDGLW) and 100-103 (QNID). The Proton acceptor role is filled by His-118. Zn(2+)-binding residues include Cys-126, Cys-129, Cys-150, and Cys-153. NAD(+) contacts are provided by residues 191–193 (GSS), 217–219 (NAE), and Ala-235.

It belongs to the sirtuin family. Class III subfamily. It depends on Zn(2+) as a cofactor.

It localises to the cytoplasm. The catalysed reaction is N(6)-acetyl-L-lysyl-[protein] + NAD(+) + H2O = 2''-O-acetyl-ADP-D-ribose + nicotinamide + L-lysyl-[protein]. Functionally, NAD-dependent protein deacetylase which modulates the activities of several proteins which are inactive in their acetylated form. Deacetylates the N-terminal lysine residue of Alba, the major archaeal chromatin protein and that, in turn, increases Alba's DNA binding affinity, thereby repressing transcription. The protein is NAD-dependent protein deacylase 2 of Archaeoglobus fulgidus (strain ATCC 49558 / DSM 4304 / JCM 9628 / NBRC 100126 / VC-16).